Consider the following 375-residue polypeptide: Response regulator aspartate phosphatase E (375 aa).

Positions 24–95 (NVTDAEMLKA…HKKKLDNMRA (72 aa)) form a coiled coil. TPR repeat units follow at residues 96 to 129 (YYYN…IPTI), 177 to 210 (IQCH…AELL), 219 to 252 (ATAF…YRKI), 258 to 291 (PQAY…AVDF), 297 to 330 (MNLF…KGYP), and 333 to 366 (EELA…QKQI).

This sequence belongs to the Rap family.

Its subcellular location is the cytoplasm. Its activity is regulated as follows. Phosphatase activity is inhibited by the phosphatase regulator PhrE. Functionally, involved in the regulation of sporulation. Acts as a phosphatase that specifically dephosphorylates the sporulation initiation phosphotransferase Spo0F and inhibits its activity. Probably plays a dispensable role in the overall context of sporulation initiation. The protein is Response regulator aspartate phosphatase E (rapE) of Bacillus subtilis (strain 168).